The following is a 349-amino-acid chain: Nuclear distribution protein nudE homolog 1-B (349 aa).

The stretch at 22–189 (VAMKYKQCSE…ELAVQQKQEK (168 aa)) forms a coiled coil.

This sequence belongs to the nudE family. In terms of assembly, self-associates. Interacts with pafah1b1. Phosphorylated in mitosis.

It localises to the cytoplasm. The protein localises to the cytoskeleton. It is found in the microtubule organizing center. Its subcellular location is the centrosome. The protein resides in the spindle. It localises to the chromosome. The protein localises to the centromere. It is found in the kinetochore. Its subcellular location is the cleavage furrow. The protein resides in the cytoplasmic vesicle membrane. Required for centrosome duplication and formation and function of the mitotic spindle. This chain is Nuclear distribution protein nudE homolog 1-B (nde1-b), found in Xenopus laevis (African clawed frog).